A 240-amino-acid polypeptide reads, in one-letter code: 4-hydroxy-tetrahydrodipicolinate reductase (240 aa).

NAD(+) contacts are provided by residues 79–81 (ATT) and 103–106 (SANM). His135 (proton donor/acceptor) is an active-site residue. His136 contacts (S)-2,3,4,5-tetrahydrodipicolinate. Lys139 (proton donor) is an active-site residue. A (S)-2,3,4,5-tetrahydrodipicolinate-binding site is contributed by 145–146 (GT).

Belongs to the DapB family.

It localises to the cytoplasm. It catalyses the reaction (S)-2,3,4,5-tetrahydrodipicolinate + NAD(+) + H2O = (2S,4S)-4-hydroxy-2,3,4,5-tetrahydrodipicolinate + NADH + H(+). The catalysed reaction is (S)-2,3,4,5-tetrahydrodipicolinate + NADP(+) + H2O = (2S,4S)-4-hydroxy-2,3,4,5-tetrahydrodipicolinate + NADPH + H(+). It participates in amino-acid biosynthesis; L-lysine biosynthesis via DAP pathway; (S)-tetrahydrodipicolinate from L-aspartate: step 4/4. Catalyzes the conversion of 4-hydroxy-tetrahydrodipicolinate (HTPA) to tetrahydrodipicolinate. This is 4-hydroxy-tetrahydrodipicolinate reductase from Staphylococcus epidermidis (strain ATCC 12228 / FDA PCI 1200).